The sequence spans 327 residues: Phenylalanine--tRNA ligase alpha subunit (327 aa).

Residue Glu-252 coordinates Mg(2+).

This sequence belongs to the class-II aminoacyl-tRNA synthetase family. Phe-tRNA synthetase alpha subunit type 1 subfamily. As to quaternary structure, tetramer of two alpha and two beta subunits. Requires Mg(2+) as cofactor.

Its subcellular location is the cytoplasm. The catalysed reaction is tRNA(Phe) + L-phenylalanine + ATP = L-phenylalanyl-tRNA(Phe) + AMP + diphosphate + H(+). The polypeptide is Phenylalanine--tRNA ligase alpha subunit (Salmonella newport (strain SL254)).